Reading from the N-terminus, the 426-residue chain is Enolase (426 aa).

G41 is a binding site for phosphoenolpyruvate. S43 contacts Mg(2+). Position 165 (E165) interacts with phosphoenolpyruvate. (2R)-2-phosphoglycerate-binding residues include E165 and E206. Residue E206 is the Proton donor of the active site. Mg(2+)-binding residues include D243, E286, and D313. Residues D313, K338, R367, S368, and K389 each contribute to the phosphoenolpyruvate site. K338, R367, and S368 together coordinate (2R)-2-phosphoglycerate. K338 serves as the catalytic Proton acceptor.

The protein belongs to the enolase family. Homodimer. Requires Mg(2+) as cofactor.

It localises to the cytoplasm. The protein localises to the secreted. The protein resides in the cell surface. The catalysed reaction is (2R)-2-phosphoglycerate = phosphoenolpyruvate + H2O. It participates in carbohydrate degradation; glycolysis; pyruvate from D-glyceraldehyde 3-phosphate: step 4/5. Functionally, catalyzes the reversible conversion of 2-phosphoglycerate (2-PG) into phosphoenolpyruvate (PEP). It is essential for the degradation of carbohydrates via glycolysis. The polypeptide is Enolase (Chloroflexus aurantiacus (strain ATCC 29366 / DSM 635 / J-10-fl)).